A 360-amino-acid polypeptide reads, in one-letter code: 3-dehydroquinate synthase (360 aa).

Residues 72–77 (DGEEYK), 106–110 (GVIGD), 130–131 (TT), Lys143, and Lys152 each bind NAD(+). Zn(2+) contacts are provided by Glu185, His248, and His265.

Belongs to the sugar phosphate cyclases superfamily. Dehydroquinate synthase family. Requires Co(2+) as cofactor. It depends on Zn(2+) as a cofactor. NAD(+) serves as cofactor.

It is found in the cytoplasm. It carries out the reaction 7-phospho-2-dehydro-3-deoxy-D-arabino-heptonate = 3-dehydroquinate + phosphate. It participates in metabolic intermediate biosynthesis; chorismate biosynthesis; chorismate from D-erythrose 4-phosphate and phosphoenolpyruvate: step 2/7. Functionally, catalyzes the conversion of 3-deoxy-D-arabino-heptulosonate 7-phosphate (DAHP) to dehydroquinate (DHQ). The polypeptide is 3-dehydroquinate synthase (Geotalea uraniireducens (strain Rf4) (Geobacter uraniireducens)).